We begin with the raw amino-acid sequence, 1477 residues long: Ring canal kelch protein (1477 aa).

Disordered regions lie at residues Leu-19–Gly-62, Leu-76–Gly-96, and Ser-108–Glu-137. Positions Ser-20 to Asn-46 are enriched in low complexity. A phosphoserine mark is found at Ser-108 and Ser-111. Positions Cys-157–Glu-223 constitute a BTB domain. Kelch repeat units lie at residues Ile-404–Asp-449, Lys-450–Gly-496, Ile-498–Gly-543, Leu-545–Asn-592, Leu-594–Gly-639, and Leu-641–Lys-687. Sec-690 is a non-standard amino acid (selenocysteine). 5 disordered regions span residues Pro-744 to Ile-841, His-1119 to Thr-1200, Arg-1291 to Asp-1326, Pro-1359 to Lys-1416, and Pro-1446 to Asp-1477. Composition is skewed to low complexity over residues Ala-763–Asn-813 and Ala-820–Gln-839. The segment covering Ile-1125 to Thr-1137 has biased composition (polar residues). A compositionally biased stretch (low complexity) spans Lys-1166–Ser-1192. 2 stretches are compositionally biased toward low complexity: residues Gln-1374–Gln-1391 and Thr-1456–Asp-1477.

As to expression, both proteins are expressed in ovaries, male testis, ovariectomized females, cuticle, salivary gland and imaginal disks. Kelch short protein is the predominant form and is also expressed in fat bodies. On entry into metamorphosis levels of full-length protein increase in testis and imaginal disks.

Its subcellular location is the cytoplasm. It is found in the cytoskeleton. Component of ring canals that regulates the flow of cytoplasm between cells. May be involved in the regulation of cytoplasm flow from nurse cells to the oocyte during oogenesis. Binds actin. The protein is Ring canal kelch protein (kel) of Drosophila melanogaster (Fruit fly).